The following is a 130-amino-acid chain: Small ribosomal subunit protein uS9 (130 aa).

The interval 109-130 (RAKERKKYGLKAARRAPQFSKR) is disordered. Positions 111–130 (KERKKYGLKAARRAPQFSKR) are enriched in basic residues.

Belongs to the universal ribosomal protein uS9 family.

This is Small ribosomal subunit protein uS9 from Heliobacterium modesticaldum (strain ATCC 51547 / Ice1).